Here is a 285-residue protein sequence, read N- to C-terminus: Nucleotide-binding protein Pfl01_0854 (285 aa).

8-15 provides a ligand contact to ATP; the sequence is GRSGSGKS. 60–63 serves as a coordination point for GTP; it reads DARN.

This sequence belongs to the RapZ-like family.

Displays ATPase and GTPase activities. This Pseudomonas fluorescens (strain Pf0-1) protein is Nucleotide-binding protein Pfl01_0854.